The primary structure comprises 438 residues: Aspartate--tRNA(Asp) ligase (438 aa).

Residue glutamate 170 participates in L-aspartate binding. The aspartate stretch occupies residues 192–195 (QLYK). Arginine 214 contributes to the L-aspartate binding site. Residues 214–216 (RAE), 222–224 (RHL), and glutamate 361 contribute to the ATP site. Mg(2+) contacts are provided by glutamate 361 and serine 364. L-aspartate-binding residues include serine 364 and arginine 368. 409-412 (GAER) serves as a coordination point for ATP.

It belongs to the class-II aminoacyl-tRNA synthetase family. Type 2 subfamily. As to quaternary structure, homodimer. Mg(2+) serves as cofactor.

It localises to the cytoplasm. It catalyses the reaction tRNA(Asp) + L-aspartate + ATP = L-aspartyl-tRNA(Asp) + AMP + diphosphate. Its function is as follows. Catalyzes the attachment of L-aspartate to tRNA(Asp) in a two-step reaction: L-aspartate is first activated by ATP to form Asp-AMP and then transferred to the acceptor end of tRNA(Asp). Is specific for tRNA(Asp) since it aspartylates tRNA(Asn) 3 orders of magnitude less efficiently than tRNA(Asp). The sequence is that of Aspartate--tRNA(Asp) ligase from Thermococcus kodakarensis (strain ATCC BAA-918 / JCM 12380 / KOD1) (Pyrococcus kodakaraensis (strain KOD1)).